A 101-amino-acid chain; its full sequence is ATP synthase subunit c (101 aa).

The next 2 helical transmembrane spans lie at 31 to 51 and 81 to 101; these read AFAY…GAGQ and AISE…IFVG.

This sequence belongs to the ATPase C chain family. F-type ATPases have 2 components, F(1) - the catalytic core - and F(0) - the membrane proton channel. F(1) has five subunits: alpha(3), beta(3), gamma(1), delta(1), epsilon(1). F(0) has three main subunits: a(1), b(2) and c(10-14). The alpha and beta chains form an alternating ring which encloses part of the gamma chain. F(1) is attached to F(0) by a central stalk formed by the gamma and epsilon chains, while a peripheral stalk is formed by the delta and b chains.

The protein resides in the cell membrane. Its function is as follows. F(1)F(0) ATP synthase produces ATP from ADP in the presence of a proton or sodium gradient. F-type ATPases consist of two structural domains, F(1) containing the extramembraneous catalytic core and F(0) containing the membrane proton channel, linked together by a central stalk and a peripheral stalk. During catalysis, ATP synthesis in the catalytic domain of F(1) is coupled via a rotary mechanism of the central stalk subunits to proton translocation. In terms of biological role, key component of the F(0) channel; it plays a direct role in translocation across the membrane. A homomeric c-ring of between 10-14 subunits forms the central stalk rotor element with the F(1) delta and epsilon subunits. The chain is ATP synthase subunit c from Mesomycoplasma hyopneumoniae (strain J / ATCC 25934 / NCTC 10110) (Mycoplasma hyopneumoniae).